A 187-amino-acid chain; its full sequence is Elongation factor P (187 aa).

This sequence belongs to the elongation factor P family.

It is found in the cytoplasm. It functions in the pathway protein biosynthesis; polypeptide chain elongation. Its function is as follows. Involved in peptide bond synthesis. Stimulates efficient translation and peptide-bond synthesis on native or reconstituted 70S ribosomes in vitro. Probably functions indirectly by altering the affinity of the ribosome for aminoacyl-tRNA, thus increasing their reactivity as acceptors for peptidyl transferase. This is Elongation factor P from Mycoplasmopsis agalactiae (strain NCTC 10123 / CIP 59.7 / PG2) (Mycoplasma agalactiae).